The chain runs to 449 residues: Flavonol 7-O-beta-glucosyltransferase UGT74F1 (449 aa).

Histidine 18 functions as the Proton acceptor in the catalytic mechanism. An anthocyanidin is bound at residue histidine 18. Aspartate 111 serves as the catalytic Charge relay. UDP-alpha-D-glucose contacts are provided by threonine 133, glutamine 327, histidine 342, tryptophan 345, asparagine 346, serine 347, glutamate 350, aspartate 366, and glutamine 367.

This sequence belongs to the UDP-glycosyltransferase family.

It carries out the reaction a 7-O-hydroxy-flavonol + UDP-alpha-D-glucose = a flavonol 7-O-beta-D-glucoside + UDP + H(+). Functionally, possesses quercetin 7-O-glucosyltransferase and 4'-O-glucosyltransferase activities in vitro. Also active in vitro on benzoates and benzoate derivatives. Has low affinity for the tryptophan precursor anthranilate. Catalyzes the formation of anthranilate glucose ester. Is a minor source of this activity in the plant. The polypeptide is Flavonol 7-O-beta-glucosyltransferase UGT74F1 (Arabidopsis thaliana (Mouse-ear cress)).